Consider the following 81-residue polypeptide: Alpha-toxin Ac1 (81 aa).

The first 17 residues, 1 to 17, serve as a signal peptide directing secretion; sequence YIVMISLALVVMIGVES. One can recognise an LCN-type CS-alpha/beta domain in the interval 19–80; the sequence is RDGYIVYPNN…PIKDPSQKCT (62 aa). 4 cysteine pairs are disulfide-bonded: Cys-29–Cys-79, Cys-33–Cys-51, Cys-37–Cys-61, and Cys-41–Cys-63.

This sequence belongs to the long (4 C-C) scorpion toxin superfamily. Sodium channel inhibitor family. Alpha subfamily. Expressed by the venom gland.

It is found in the secreted. In terms of biological role, alpha toxins bind voltage-independently at site-3 of sodium channels (Nav) and inhibit the inactivation of the activated channels, thereby blocking neuronal transmission. The sequence is that of Alpha-toxin Ac1 from Androctonus crassicauda (Arabian fat-tailed scorpion).